We begin with the raw amino-acid sequence, 491 residues long: Peptidoglycan D,D-transpeptidase PbpA (491 aa).

Topologically, residues 1 to 8 (MNTSLRRV) are cytoplasmic. The chain crosses the membrane as a helical; Signal-anchor for type II membrane protein span at residues 9-29 (AVAIMVLIVLLLANATVTQVF). Topologically, residues 30-491 (AADGLRADPR…TIAAALREGS (462 aa)) are periplasmic. Residues 160–484 (GSVVALEPST…AAPIGRATIA (325 aa)) form a transpeptidase region. Ser222 functions as the Acyl-ester intermediate in the catalytic mechanism.

This sequence belongs to the transpeptidase family.

Its subcellular location is the cell inner membrane. It carries out the reaction Preferential cleavage: (Ac)2-L-Lys-D-Ala-|-D-Ala. Also transpeptidation of peptidyl-alanyl moieties that are N-acyl substituents of D-alanine.. It functions in the pathway cell wall biogenesis; peptidoglycan biosynthesis. Transpeptidase that catalyzes cross-linking of the peptidoglycan cell wall. Required for the regulation of cell length. The polypeptide is Peptidoglycan D,D-transpeptidase PbpA (pbpA) (Mycolicibacterium smegmatis (strain ATCC 700084 / mc(2)155) (Mycobacterium smegmatis)).